A 295-amino-acid polypeptide reads, in one-letter code: Nucleotide-binding protein RD1_1380 (295 aa).

Position 16–23 (16–23) interacts with ATP; that stretch reads GPSGAGRS. 63–66 provides a ligand contact to GTP; the sequence is DPRN.

The protein belongs to the RapZ-like family.

In terms of biological role, displays ATPase and GTPase activities. This is Nucleotide-binding protein RD1_1380 from Roseobacter denitrificans (strain ATCC 33942 / OCh 114) (Erythrobacter sp. (strain OCh 114)).